Consider the following 365-residue polypeptide: tRNA-specific 2-thiouridylase MnmA (365 aa).

Residues Ala-14 to Ser-21 and Leu-40 each bind ATP. Cys-108 serves as the catalytic Nucleophile. A disulfide bridge links Cys-108 with Cys-204. Gly-132 contributes to the ATP binding site. Positions Lys-154 to Gln-156 are interaction with tRNA. The Cysteine persulfide intermediate role is filled by Cys-204.

It belongs to the MnmA/TRMU family.

The protein resides in the cytoplasm. It carries out the reaction S-sulfanyl-L-cysteinyl-[protein] + uridine(34) in tRNA + AH2 + ATP = 2-thiouridine(34) in tRNA + L-cysteinyl-[protein] + A + AMP + diphosphate + H(+). In terms of biological role, catalyzes the 2-thiolation of uridine at the wobble position (U34) of tRNA, leading to the formation of s(2)U34. This is tRNA-specific 2-thiouridylase MnmA from Rickettsia rickettsii (strain Iowa).